Reading from the N-terminus, the 249-residue chain is Proteasome subunit alpha (249 aa).

It belongs to the peptidase T1A family. As to quaternary structure, the 20S proteasome core is composed of 14 alpha and 14 beta subunits that assemble into four stacked heptameric rings, resulting in a barrel-shaped structure. The two inner rings, each composed of seven catalytic beta subunits, are sandwiched by two outer rings, each composed of seven alpha subunits. The catalytic chamber with the active sites is on the inside of the barrel. Has a gated structure, the ends of the cylinder being occluded by the N-termini of the alpha-subunits. Is capped at one or both ends by the proteasome regulatory ATPase, PAN.

The protein resides in the cytoplasm. Its activity is regulated as follows. The formation of the proteasomal ATPase PAN-20S proteasome complex, via the docking of the C-termini of PAN into the intersubunit pockets in the alpha-rings, triggers opening of the gate for substrate entry. Interconversion between the open-gate and close-gate conformations leads to a dynamic regulation of the 20S proteasome proteolysis activity. Functionally, component of the proteasome core, a large protease complex with broad specificity involved in protein degradation. The protein is Proteasome subunit alpha of Methanosarcina barkeri (strain Fusaro / DSM 804).